We begin with the raw amino-acid sequence, 784 residues long: Melanoma-associated antigen D1 (784 aa).

Positions 41–67 are disordered; sequence PTNQATAAASGPNASPQSSQPPSANEV. Low complexity predominate over residues 47–65; that stretch reads AAASGPNASPQSSQPPSAN. Y97 bears the Phosphotyrosine mark. Composition is skewed to polar residues over residues 195–214, 232–246, 259–269, and 306–320; these read PTAE…TSQA, AQTS…NLES, NNLNVEESSSG, and LAWQ…QPAR. The segment at 195 to 339 is disordered; sequence PTAETQTQNI…PARQTPPAWQ (145 aa). Tandem repeats lie at residues 302–307, 308–313, 314–319, 338–343, 344–349, 350–355, 356–361, 362–367, 368–373, 374–379, 380–385, 386–391, 392–397, 398–403, 404–409, 410–415, 416–421, 422–427, and 428–433. The segment at 302–450 is 22 X 6 AA tandem repeats of W-[PQ]-X-P-X-X; that stretch reads WQTPLAWQNP…VPPDWQNLRP (149 aa). The disordered stretch occupies residues 379–418; sequence AWQNPPGWQTPPGWQTPPGWQGPPDWQGPPDWPLPPDWPL. Over residues 383–403 the composition is skewed to low complexity; the sequence is PPGWQTPPGWQTPPGWQGPPD. Residues 404-418 are compositionally biased toward pro residues; it reads WQGPPDWPLPPDWPL. The stretch at 434 to 438 is one 20; approximate repeat; it reads WIPTD. 2 consecutive repeat copies span residues 439 to 444 and 445 to 450. Positions 441-471 are disordered; the sequence is VPPDWQNLRPSPNLRPSPNSRASQNLGASQP. Over residues 447 to 461 the composition is skewed to low complexity; it reads NLRPSPNLRPSPNSR. One can recognise an MAGE domain in the interval 477–675; sequence LQERANKLVK…RDWTAQFMEA (199 aa).

As to quaternary structure, interacts with DLX5, DLX7 and MSX2 and forms homomultimers. Interacts with UNC5A. Interacts with TRIM28 and PJA1. Interacts with NGFR/p75NTR and RORA.

It localises to the cytoplasm. The protein resides in the cell membrane. The protein localises to the nucleus. In terms of biological role, involved in the apoptotic response after nerve growth factor (NGF) binding in neuronal cells. Inhibits cell cycle progression, and facilitates NGFR-mediated apoptosis. May act as a regulator of the function of DLX family members. May enhance ubiquitin ligase activity of RING-type zinc finger-containing E3 ubiquitin-protein ligases. Proposed to act through recruitment and/or stabilization of the Ubl-conjugating enzyme (E2) at the E3:substrate complex. Plays a role in the circadian rhythm regulation. May act as RORA co-regulator, modulating the expression of core clock genes such as BMAL1 and NFIL3, induced, or NR1D1, repressed. The chain is Melanoma-associated antigen D1 (MAGED1) from Sus scrofa (Pig).